A 257-amino-acid chain; its full sequence is uncharacterized protein (257 aa).

Active-site charge relay system residues include serine 122 and histidine 236.

This sequence belongs to the peptidase S9B family.

This is an uncharacterized protein from Bacillus subtilis (strain 168).